Reading from the N-terminus, the 396-residue chain is MFENITAAPADPILGLADLFRADERPGKINLGIGVYKDETGKTPVLTSVKKAEQYLLENETTKNYLGIDGIPEFGRCTQELLFGKGSALINDKRARTAQTPGGTGALRVAADFLAKNTSVKRVWVSNPSWPNHKSVFNSAGLEVREYAYYDAENHTLDFDALINSLNEAQAGDVVLFHGCCHNPTGIDPTLEQWQTLAQLSVEKGWLPLFDFAYQGFARGLEEDAEGLRAFAAMHKELIVASSYSKNFGLYNERVGACTLVAADSETVDRAFSQMKAAIRANYSNPPAHGASVVATILSNDALRAIWEQELTDMRQRIQRMRQLFVNTLQEKGANRDFSFIIKQNGMFSFSGLTKEQVLRLREEFGVYAVASGRVNVAGMTPDNMAPLCEAIVAVL.

L-aspartate contacts are provided by Gly-34, Trp-130, and Asn-183. Lys-246 carries the post-translational modification N6-(pyridoxal phosphate)lysine. Arg-374 lines the L-aspartate pocket.

This sequence belongs to the class-I pyridoxal-phosphate-dependent aminotransferase family. As to quaternary structure, homodimer. Requires pyridoxal 5'-phosphate as cofactor.

The protein localises to the cytoplasm. The catalysed reaction is L-aspartate + 2-oxoglutarate = oxaloacetate + L-glutamate. In Escherichia coli (strain K12), this protein is Aspartate aminotransferase (aspC).